The primary structure comprises 262 residues: Acyl-[acyl-carrier-protein]--UDP-N-acetylglucosamine O-acyltransferase (262 aa).

It belongs to the transferase hexapeptide repeat family. LpxA subfamily. In terms of assembly, homotrimer.

It localises to the cytoplasm. It catalyses the reaction a (3R)-hydroxyacyl-[ACP] + UDP-N-acetyl-alpha-D-glucosamine = a UDP-3-O-[(3R)-3-hydroxyacyl]-N-acetyl-alpha-D-glucosamine + holo-[ACP]. It participates in glycolipid biosynthesis; lipid IV(A) biosynthesis; lipid IV(A) from (3R)-3-hydroxytetradecanoyl-[acyl-carrier-protein] and UDP-N-acetyl-alpha-D-glucosamine: step 1/6. Its function is as follows. Involved in the biosynthesis of lipid A, a phosphorylated glycolipid that anchors the lipopolysaccharide to the outer membrane of the cell. The polypeptide is Acyl-[acyl-carrier-protein]--UDP-N-acetylglucosamine O-acyltransferase (Salmonella paratyphi B (strain ATCC BAA-1250 / SPB7)).